The chain runs to 210 residues: MTQQLGAMVLTCCTAKCCEPVSSRGDRETADGRMGERRAVEVWRTADRRWRMADGRTADGRAVEWRSGRMGGPRRDGRVASSGVEGGPWMAASASGVPRHGRHRVWCLVQPSGRPAGRQGESERAGESETRVGVGVRLAASGLRRGRVAACECVMLLLVWCLPPGREAEQRSLGISYMGWASVVMDGSWSWPYCSHPELENTVTKRDHPD.

Residues 67 to 78 (SGRMGGPRRDGR) show a composition bias toward basic and acidic residues. The segment at 67–87 (SGRMGGPRRDGRVASSGVEGG) is disordered.

This Zea mays (Maize) protein is Transposable element activator uncharacterized 23 kDa protein.